The sequence spans 342 residues: Polygalacturonase inhibitor 3 (342 aa).

The first 29 residues, 1–29 (MTQFNIPVTMSSSLSIILVILVSLRTALS), serve as a signal peptide directing secretion. Cystine bridges form between cysteine 32/cysteine 62 and cysteine 63/cysteine 72. Residue asparagine 64 is glycosylated (N-linked (GlcNAc...) asparagine). LRR repeat units lie at residues 82–107 (NNLD…LPYL), 108–132 (NFLY…LTQL), 133–156 (HYLY…IKTL), 157–180 (VTLD…LPNL), 181–205 (VGIT…SKLF), 206–228 (TSMT…NLNL), 229–252 (AFVD…DKNT), 253–275 (QKIH…SKNL), 276–299 (NGLD…LKFL), and 300–319 (HSLN…GGNL). A glycan (N-linked (GlcNAc...) asparagine) is linked at asparagine 141. Asparagine 303 carries N-linked (GlcNAc...) asparagine glycosylation. Cystine bridges form between cysteine 310–cysteine 332 and cysteine 334–cysteine 341.

This sequence belongs to the polygalacturonase-inhibiting protein family. In terms of tissue distribution, found in suspension-cultured cells and to a lesser extent in hypocotyls, leaves and flowers.

It localises to the secreted. The protein localises to the cell wall. The protein resides in the membrane. Inhibitor of fungal polygalacturonase. It is an important factor for plant resistance to phytopathogenic fungi. This is Polygalacturonase inhibitor 3 (PGIP3) from Phaseolus vulgaris (Kidney bean).